A 375-amino-acid chain; its full sequence is Ribosomal RNA large subunit methyltransferase F (375 aa).

Disordered stretches follow at residues 1-39 and 262-281; these read MKNN…AAVK and NQRK…GKPT. Over residues 27 to 38 the composition is skewed to basic residues; that stretch reads AKPKRVKKKAAV.

This sequence belongs to the methyltransferase superfamily. METTL16/RlmF family.

The protein resides in the cytoplasm. It catalyses the reaction adenosine(1618) in 23S rRNA + S-adenosyl-L-methionine = N(6)-methyladenosine(1618) in 23S rRNA + S-adenosyl-L-homocysteine + H(+). In terms of biological role, specifically methylates the adenine in position 1618 of 23S rRNA. In Vibrio parahaemolyticus serotype O3:K6 (strain RIMD 2210633), this protein is Ribosomal RNA large subunit methyltransferase F.